We begin with the raw amino-acid sequence, 448 residues long: Integrator complex subunit 15 (448 aa).

The protein belongs to the Integrator subunit 15 family. As to quaternary structure, component of the Integrator complex, composed of core subunits INTS1, INTS2, INTS3, INTS4, INTS5, INTS6, INTS7, INTS8, INTS9/RC74, INTS10, INTS11/CPSF3L, INTS12, INTS13, INTS14 and INTS15. The core complex associates with protein phosphatase 2A subunits PPP2CA and PPP2R1A, to form the Integrator-PP2A (INTAC) complex. INTS15 is part of the tail subcomplex, composed of INTS10, INTS13, INTS14 and INTS15.

Its subcellular location is the nucleus. It localises to the chromosome. Its function is as follows. Component of the integrator complex, a multiprotein complex that terminates RNA polymerase II (Pol II) transcription in the promoter-proximal region of genes. The integrator complex provides a quality checkpoint during transcription elongation by driving premature transcription termination of transcripts that are unfavorably configured for transcriptional elongation: the complex terminates transcription by (1) catalyzing dephosphorylation of the C-terminal domain (CTD) of Pol II subunit POLR2A/RPB1 and SUPT5H/SPT5, (2) degrading the exiting nascent RNA transcript via endonuclease activity and (3) promoting the release of Pol II from bound DNA. The integrator complex is also involved in terminating the synthesis of non-coding Pol II transcripts, such as enhancer RNAs (eRNAs), small nuclear RNAs (snRNAs), telomerase RNAs and long non-coding RNAs (lncRNAs). INTS15 is part of the integrator tail module that acts as a platform for the recruitment of transcription factors at promoters. Within the integrator complex, INTS15 is required to bridge different integrator modules. In Mus musculus (Mouse), this protein is Integrator complex subunit 15.